The sequence spans 329 residues: Isopentenyl-diphosphate delta-isomerase (329 aa).

Residue 4-5 (RK) participates in substrate binding. FMN-binding positions include 59-61 (AMT), serine 89, and asparagine 116. Glutamine 146 is a binding site for substrate. Residue glutamate 147 participates in Mg(2+) binding. FMN-binding positions include lysine 178, serine 203, threonine 208, 252-254 (GVR), and 273-274 (SR).

This sequence belongs to the IPP isomerase type 2 family. In terms of assembly, homooctamer. Dimer of tetramers. FMN is required as a cofactor. Requires NADPH as cofactor. The cofactor is Mg(2+).

The protein resides in the cytoplasm. It catalyses the reaction isopentenyl diphosphate = dimethylallyl diphosphate. Its function is as follows. Involved in the biosynthesis of isoprenoids. Catalyzes the 1,3-allylic rearrangement of the homoallylic substrate isopentenyl (IPP) to its allylic isomer, dimethylallyl diphosphate (DMAPP). The polypeptide is Isopentenyl-diphosphate delta-isomerase (Streptococcus pyogenes serotype M28 (strain MGAS6180)).